Here is a 119-residue protein sequence, read N- to C-terminus: Large ribosomal subunit protein bL20 (119 aa).

Belongs to the bacterial ribosomal protein bL20 family.

Binds directly to 23S ribosomal RNA and is necessary for the in vitro assembly process of the 50S ribosomal subunit. It is not involved in the protein synthesizing functions of that subunit. This is Large ribosomal subunit protein bL20 from Alkaliphilus oremlandii (strain OhILAs) (Clostridium oremlandii (strain OhILAs)).